A 469-amino-acid chain; its full sequence is MSTNEGSLWGGRFADGPSDALAALSKSTHFDWALAPYDIKASKAHARVLHRAGLLTDEQRDGLLAGLDSLGSDVADGSFEPLPTDEDVHGALERGLIDRVGPDLGGRLRAGRSRNDQVATLFRMWLRDAVRRVADGCLEVVNALAVQAAAHPTAIMPGKTHLQAAQPILLAHHLLAHAHPLLRDVDRLADFDDRTAVSPYGSGALAGSSLGLDPDAIAEDLGFASAADNSVDATASRDFAAEAAFVFAQIGVDLSRLAEDIILWSSTEFGYVTLHDAWSTGSSIMPQKKNPDIAELARGKSGRLIGNLTGLLATLKAQPLAYNRDLQEDKEPVFDSVAQLELLLPAMAGLVGTLTFDEERMAELAPAGYTLATDIAEWLVRQGVPFRIAHEAAGAAVKVAEGRGVGLDALTDDEFASINPALTPDVREVLTVEGSVNARNARGGTAPTQVAKQLGVVRKAMEELRIRLS.

It belongs to the lyase 1 family. Argininosuccinate lyase subfamily.

Its subcellular location is the cytoplasm. It catalyses the reaction 2-(N(omega)-L-arginino)succinate = fumarate + L-arginine. It functions in the pathway amino-acid biosynthesis; L-arginine biosynthesis; L-arginine from L-ornithine and carbamoyl phosphate: step 3/3. This chain is Argininosuccinate lyase, found in Mycolicibacterium smegmatis (strain ATCC 700084 / mc(2)155) (Mycobacterium smegmatis).